Reading from the N-terminus, the 80-residue chain is Moroidotoxin A (80 aa).

A signal peptide spans 1–27; it reads MAAVKKHLRFALVAAITIALLVAGSVA. Residues 28–44 constitute a propeptide that is removed on maturation; the sequence is DESSEDIDNIVIKTPLD. 3 disulfide bridges follow: C48–C65, C53–C67, and C61–C76.

This sequence belongs to the gympietide family. As to expression, expressed in trichomes, that are stiff epidermal hairs located on the surface of petioles and leaves. Not expressed in other aerial parts.

It is found in the secreted. In terms of biological role, neurotoxin certainly responsible for the defensive, persistent, and painful stings of the giant stinging tree. Inhibits inactivation of Nav1.7/SCN9A sodium channel in sensory neurons by directly interacting with TMEM233, a newly described Nav-interacting protein. Has virtually no effect on Nav1.7/SCN9A function in heterologous expression systems and in neurons that do not express TMEM233. Also weakly but significantly affects Nav1.8/SCN10A. Coexpression of TMEM233 with Nav also confers ExTxA sensitivity to Nav1.1-Nav1.6. On the Nav1.7/SCN9A channel, causes a significant hyperpolarizing shift in the voltage dependence of activation. Its effects on Nav currents are irreversible, with no apparent reduction in activity even after repeated wash steps over 30 minutes. In vivo, induces nocifensive behavior in mice (licking or biting and shaking or lifting of the affected paw) lasting for approximately 1 hour. In Dendrocnide moroides (Gympie stinging tree), this protein is Moroidotoxin A.